We begin with the raw amino-acid sequence, 434 residues long: MAIIAIHARQIFDSRGNPTVEVDLKTAKGLFRAAVPSGASTGVHEALELRDTNSKAYMCKGVLTAVSNVNNIIAPALLKKQIPVTNQSEVDQFMIELDGKENKGNLGANAILGVSLAVCKAGAAELNLPLYRYIAKLAGHKDVIMPVPAFNVINGGSHAGNKLAMQEFMILPTGASSFTEAMQMGSEVYHNLKAVIKREFGLDACNVGDEGGFAPNIQDNMKGLQLLEEAIKIAGYTGKVEIGMDCAASEYYKKGKYDLDFKNPQSAESHWLSPDEMANVYKEMIQKYPIVSIEDPFDQDDWDAWPKLTASTNIQIVGDDLTVTNPKRIEKAIKVKACNCLLLKVNQIGSITESIEACKMAQKAGWGVMVSHRSGETEDNFIADLVVGLCTGQIKTGAPCRSERLAKYNQLLRIEEELGSTAKYAGKHFRHPQI.

Substrate is bound by residues His158 and Glu167. Residue Glu210 is the Proton donor of the active site. 3 residues coordinate Mg(2+): Asp245, Glu294, and Asp319. Substrate-binding residues include Glu294 and Asp319. Lys344 acts as the Proton acceptor in catalysis. Substrate is bound by residues 371–374 (SHRS) and Lys395.

It belongs to the enolase family. In terms of assembly, homodimer. Mg(2+) serves as cofactor.

Its subcellular location is the cytoplasm. The catalysed reaction is (2R)-2-phosphoglycerate = phosphoenolpyruvate + H2O. It participates in carbohydrate degradation; glycolysis; pyruvate from D-glyceraldehyde 3-phosphate: step 4/5. The chain is Enolase (ENO) from Schistosoma japonicum (Blood fluke).